Here is a 662-residue protein sequence, read N- to C-terminus: Probable quinol oxidase subunit 1 (662 aa).

Helical transmembrane passes span 14-34 (WMIISAQIAAPFLVIGLIAVI) and 56-76 (IGIMYLISAVLMFVRGGIDAL). Fe(II)-heme a is bound at residue His-102. 8 helical membrane-spanning segments follow: residues 103–123 (GVIMIIFMAMPFIFGLWNVVI), 140–160 (VSFWLFFAGMILFNLSFIVGG), 187–207 (IAIQISGIGSLMTGINFFVTI), 228–248 (FITTLIVILAFPVFTVALALM), 273–293 (FFWVWGHPEVYIVILPAFGMY), 311–331 (MIWATAGIAFLSFLVWVHHFF), 336–356 (GALINSFFSISTMLIGVPTGV), and 376–396 (MLFSLAFIPNFLLGGVTGVML). 4 residues coordinate Cu cation: His-279, Tyr-283, His-328, and His-329. Positions 279–283 (HPEVY) form a cross-link, 1'-histidyl-3'-tyrosine (His-Tyr). Position 414 (His-414) interacts with heme a3. 5 consecutive transmembrane segments (helical) span residues 415–435 (FHYTLVTGVVFACLAGLIFWY), 451–471 (CFWFFMIGFNVCFLPQFILGL), 492–512 (FISTIGAVLMAIGFLFLVASI), 587–604 (PVGFWMGIFMTIGGFFLI), and 608–627 (IVPALICLAGIFITMIWRSF). His-416 provides a ligand contact to Fe(II)-heme a.

Belongs to the heme-copper respiratory oxidase family. Cu cation is required as a cofactor. The cofactor is ferriheme a. It depends on Heme A3. as a cofactor.

It is found in the cell membrane. It catalyses the reaction 2 a quinol + O2 = 2 a quinone + 2 H2O. It functions in the pathway energy metabolism; oxidative phosphorylation. In terms of biological role, catalyzes quinol oxidation with the concomitant reduction of oxygen to water. The chain is Probable quinol oxidase subunit 1 (qoxB) from Staphylococcus epidermidis (strain ATCC 35984 / DSM 28319 / BCRC 17069 / CCUG 31568 / BM 3577 / RP62A).